We begin with the raw amino-acid sequence, 369 residues long: NADH-quinone oxidoreductase subunit H (369 aa).

The next 8 membrane-spanning stretches (helical) occupy residues 20–40 (VLLI…AYLV), 88–108 (ICFL…WAVI), 133–153 (IGVL…IIAG), 179–199 (IGLT…GEIV), 205–225 (MPYW…ISSL), 267–287 (ILIN…PLNI), 293–313 (IPGI…FIWI), and 328–348 (LGWK…SGVL).

It belongs to the complex I subunit 1 family. NDH-1 is composed of 14 different subunits. Subunits NuoA, H, J, K, L, M, N constitute the membrane sector of the complex.

Its subcellular location is the cell inner membrane. It carries out the reaction a quinone + NADH + 5 H(+)(in) = a quinol + NAD(+) + 4 H(+)(out). Functionally, NDH-1 shuttles electrons from NADH, via FMN and iron-sulfur (Fe-S) centers, to quinones in the respiratory chain. The immediate electron acceptor for the enzyme in this species is believed to be ubiquinone. Couples the redox reaction to proton translocation (for every two electrons transferred, four hydrogen ions are translocated across the cytoplasmic membrane), and thus conserves the redox energy in a proton gradient. This subunit may bind ubiquinone. The chain is NADH-quinone oxidoreductase subunit H from Ehrlichia canis (strain Jake).